Reading from the N-terminus, the 405-residue chain is MAKGTFERTKPHVNVGTIGHVDHGKTTLTAAITFTAAAMDPTVEKLAYDQIDKAPEEKARGITINTAHVEYNTPARHYSHVDCPGHADYVKNMITGAAQMDGAILVVSSADGPMPQTREHILLARQVGVPYIVVFMNKVDMVDDEELLELVEMEVRELLSKYEFPGDDLPVIKGSALQALEALQQNPKTARGENPWVDKIWELLDAIDAYIPTPERATDKTFLMPVEDVFTITGRGTVATGRVERGVCKVGDEVEIVGLRDTKKTTITGVEMHRKLLDQGMAGDNVGVLLRGVARDDVERGQVLAKPGSITPHTKFEASVYVLSKDEGGRHSAFFGGYRPQFYFRTTDVTGVVELPAGVEMVMPGDNVSFTVELIKPIAMEEGLRFAIREGGRTVGAGVVTKVLE.

Positions 10–215 (KPHVNVGTIG…AIDAYIPTPE (206 aa)) constitute a tr-type G domain. Residues 19 to 26 (GHVDHGKT) are G1. 19–26 (GHVDHGKT) lines the GTP pocket. Position 26 (Thr-26) interacts with Mg(2+). A G2 region spans residues 61–65 (GITIN). A G3 region spans residues 82–85 (DCPG). GTP contacts are provided by residues 82 to 86 (DCPGH) and 137 to 140 (NKVD). A G4 region spans residues 137–140 (NKVD). Residues 175-177 (SAL) form a G5 region.

Belongs to the TRAFAC class translation factor GTPase superfamily. Classic translation factor GTPase family. EF-Tu/EF-1A subfamily. As to quaternary structure, monomer.

Its subcellular location is the cytoplasm. It carries out the reaction GTP + H2O = GDP + phosphate + H(+). Functionally, GTP hydrolase that promotes the GTP-dependent binding of aminoacyl-tRNA to the A-site of ribosomes during protein biosynthesis. This is Elongation factor Tu from Deinococcus geothermalis (strain DSM 11300 / CIP 105573 / AG-3a).